Here is a 362-residue protein sequence, read N- to C-terminus: MRVTAPRTLLLLLSAALALTETWAGSHSMRYFDTAVSRPGRGEPRFITVGYVDDTQFVRFDSDAASPRMEPRAPWIEQEGPEYWDRETQTSKAQAQTDRENLRIALRYYNQSEAGSHTFQRMFGCDVGPDGRLLRGYSQSAYDGKDYIALNEDLSSWTAADTAAQITQRKWEAAREAEQLRAYLEGTCVEWLRRYLENGRETLQRADTPKTHVTHHPISDHEATLRCWALGFYPAEITLTWQRDGEDQTQDTELVETRPAGDGTFQKWAAVVVPSGEEERYTCHVQHEGLPKPLTLRWEPSSQSTIPIVGIVAGLAVLAVVVIGAVVTAVICRRKSSGGKGGSYSQAASSDSAQGSDVSLTA.

Residues 1 to 24 (MRVTAPRTLLLLLSAALALTETWA) form the signal peptide. An alpha-1 region spans residues 25–114 (GSHSMRYFDT…ALRYYNQSEA (90 aa)). The Extracellular segment spans residues 25-308 (GSHSMRYFDT…EPSSQSTIPI (284 aa)). An N-linked (GlcNAc...) asparagine glycan is attached at asparagine 110. The alpha-2 stretch occupies residues 115–206 (GSHTFQRMFG…ENGRETLQRA (92 aa)). 2 cysteine pairs are disulfide-bonded: cysteine 125-cysteine 188 and cysteine 227-cysteine 283. The interval 207–298 (DTPKTHVTHH…GLPKPLTLRW (92 aa)) is alpha-3. Positions 209 to 295 (PKTHVTHHPI…QHEGLPKPLT (87 aa)) constitute an Ig-like C1-type domain. The connecting peptide stretch occupies residues 299-308 (EPSSQSTIPI). A helical membrane pass occupies residues 309–332 (VGIVAGLAVLAVVVIGAVVTAVIC). The Cytoplasmic segment spans residues 333-362 (RRKSSGGKGGSYSQAASSDSAQGSDVSLTA). Positions 335-362 (KSSGGKGGSYSQAASSDSAQGSDVSLTA) are disordered. A compositionally biased stretch (low complexity) spans 343–362 (SYSQAASSDSAQGSDVSLTA).

This sequence belongs to the MHC class I family. In terms of assembly, heterodimer of an alpha chain and a beta chain (beta-2-microglobulin).

Its subcellular location is the membrane. In terms of biological role, involved in the presentation of foreign antigens to the immune system. The polypeptide is Class I histocompatibility antigen, Gogo-B*0102 alpha chain (Gorilla gorilla gorilla (Western lowland gorilla)).